The primary structure comprises 535 residues: Probable serine/threonine protein phosphatase 2A regulatory subunit B''delta (535 aa).

Positions 67-104 are disordered; sequence SGTNSGSNSPLASMFPARNGPPLSPRNSTGSPRIARQR. EF-hand domains are found at residues 174-209 and 387-422; these read VPSF…GNML and SSEP…QLHR. 4 residues coordinate Ca(2+): Asp-400, Asp-402, Asn-404, and Glu-411.

PP2A consists of a common heterodimeric core enzyme, composed of a 36 kDa catalytic subunit (subunit C) and a 65 kDa constant regulatory subunit (PR65 or subunit A), that associates with a variety of regulatory subunits. Proteins that associate with the core dimer include three families of regulatory subunits B (the R2/B/PR55/B55, R3/B''/PR72/PR130/PR59 and R5/B'/B56 families) and cell signaling molecules.

Functionally, probable regulatory subunit of type 2A protein phosphatase. The chain is Probable serine/threonine protein phosphatase 2A regulatory subunit B''delta (B''DELTA) from Arabidopsis thaliana (Mouse-ear cress).